The primary structure comprises 312 residues: Aspartate carbamoyltransferase catalytic subunit (312 aa).

Carbamoyl phosphate contacts are provided by arginine 58 and threonine 59. L-aspartate is bound at residue lysine 86. Residues arginine 108, histidine 136, and glutamine 139 each coordinate carbamoyl phosphate. L-aspartate contacts are provided by arginine 169 and arginine 223. Residues glycine 264 and proline 265 each coordinate carbamoyl phosphate.

Belongs to the aspartate/ornithine carbamoyltransferase superfamily. ATCase family. In terms of assembly, heterododecamer (2C3:3R2) of six catalytic PyrB chains organized as two trimers (C3), and six regulatory PyrI chains organized as three dimers (R2).

It catalyses the reaction carbamoyl phosphate + L-aspartate = N-carbamoyl-L-aspartate + phosphate + H(+). Its pathway is pyrimidine metabolism; UMP biosynthesis via de novo pathway; (S)-dihydroorotate from bicarbonate: step 2/3. Functionally, catalyzes the condensation of carbamoyl phosphate and aspartate to form carbamoyl aspartate and inorganic phosphate, the committed step in the de novo pyrimidine nucleotide biosynthesis pathway. This Desulforapulum autotrophicum (strain ATCC 43914 / DSM 3382 / VKM B-1955 / HRM2) (Desulfobacterium autotrophicum) protein is Aspartate carbamoyltransferase catalytic subunit.